Here is a 655-residue protein sequence, read N- to C-terminus: Sphingomyelin phosphodiesterase 3 (655 aa).

The Cytoplasmic portion of the chain corresponds to 1–10; sequence MVLYTTPFPN. An intramembrane region (helical) is located at residues 11–31; that stretch reads SCLSALHCVSWALIFPCYWLV. The Cytoplasmic segment spans residues 32–64; it reads DRLAASFIPTTYEKRQRADDPCCLQLLCTALFT. S-palmitoyl cysteine attachment occurs at residues Cys53, Cys54, and Cys59. The segment at residues 65–85 is an intramembrane region (helical); the sequence is PIYLALLVASLPFAFLGFLFW. Residues 86–655 lie on the Cytoplasmic side of the membrane; the sequence is SPLQSARRPY…LMVSSGEEEA (570 aa). At Ser178 the chain carries Phosphoserine. The disordered stretch occupies residues 210–319; that stretch reads VEYKGDGGRH…DTSASGEPGA (110 aa). Basic and acidic residues-rich tracts occupy residues 212–222 and 248–257; these read YKGDGGRHPGD and GGEEGGRPPE. The segment covering 279-299 has biased composition (polar residues); the sequence is TPNHNQQDGDSGSLGSPSASR. The residue at position 291 (Ser291) is a Phosphoserine. Glu364 is a Mg(2+) binding site. 2 S-palmitoyl cysteine lipidation sites follow: Cys397 and Cys398. The Proton acceptor role is filled by His639.

The protein belongs to the neutral sphingomyelinase family. It depends on Mg(2+) as a cofactor. In terms of processing, palmitoylated, palmitoylation-deficient proteins are targeted for lysosomal degradation. Predominantly expressed in brain.

The protein resides in the golgi apparatus membrane. The protein localises to the cell membrane. The catalysed reaction is a sphingomyelin + H2O = phosphocholine + an N-acylsphing-4-enine + H(+). It carries out the reaction N-(15Z-tetracosenoyl)sphing-4-enine-1-phosphocholine + H2O = N-(15Z-tetracosenoyl)-sphing-4-enine + phosphocholine + H(+). It catalyses the reaction N-(tetracosanoyl)-sphing-4-enine-1-phosphocholine + H2O = N-tetracosanoyl-sphing-4-enine + phosphocholine + H(+). The enzyme catalyses an N-(acyl)-sphingosylphosphocholine + H2O = an N-acyl-sphingoid base + phosphocholine + H(+). The catalysed reaction is 1-hexadecanoyl-sn-glycero-3-phosphocholine + H2O = 1-hexadecanoyl-sn-glycerol + phosphocholine + H(+). It carries out the reaction 1-O-octadecyl-sn-glycero-3-phosphocholine + H2O = 1-O-octadecyl-sn-glycerol + phosphocholine + H(+). It catalyses the reaction a sphingosylphosphocholine + H2O = a sphingoid base + phosphocholine + H(+). The enzyme catalyses N-(hexadecanoyl)-sphing-4-enine-1-phosphocholine + H2O = N-hexadecanoylsphing-4-enine + phosphocholine + H(+). It participates in lipid metabolism; sphingolipid metabolism. Its activity is regulated as follows. Inhibited by nSMase inhibitor GW4869. Binding of anionic phospholipids (APLs) such as phosphatidylserine (PS) and phosphatidic acid (PA) increases enzymatic activity. In terms of biological role, catalyzes the hydrolysis of sphingomyelin to form ceramide and phosphocholine. Ceramide mediates numerous cellular functions, such as apoptosis and growth arrest, and is capable of regulating these 2 cellular events independently. Also hydrolyzes sphingosylphosphocholine. Regulates the cell cycle by acting as a growth suppressor in confluent cells. Probably acts as a regulator of postnatal development and participates in bone and dentin mineralization. Binds to anionic phospholipids (APLs) such as phosphatidylserine (PS) and phosphatidic acid (PA) that modulate enzymatic activity and subcellular location. May be involved in IL-1-beta-induced JNK activation in hepatocytes. May act as a mediator in transcriptional regulation of NOS2/iNOS via the NF-kappa-B activation under inflammatory conditions. The polypeptide is Sphingomyelin phosphodiesterase 3 (Homo sapiens (Human)).